Reading from the N-terminus, the 183-residue chain is Streptavidin-V2 (183 aa).

Positions 1–24 (MRKIVVAAIAVSLTTVGITASASA) are cleaved as a signal peptide. An Avidin-like domain is found at 37–159 (AEAGITGTWY…GHDTFTKVKP (123 aa)). Residues Tyr-67 and Tyr-78 each coordinate biotin. A Cell attachment site; atypical motif is present at residues 83–85 (RYD). Residues Trp-116, Trp-132, and Trp-144 each coordinate biotin.

This sequence belongs to the avidin/streptavidin family. Homotetramer.

It localises to the secreted. Its function is as follows. The biological function of streptavidin is not known. Forms a strong non-covalent specific complex with biotin (one molecule of biotin per subunit of streptavidin). In Streptomyces violaceus (Streptomyces venezuelae), this protein is Streptavidin-V2.